The chain runs to 201 residues: NADH-quinone oxidoreductase subunit C 1 (201 aa).

Belongs to the complex I 30 kDa subunit family. In terms of assembly, NDH-1 is composed of 14 different subunits. Subunits NuoB, C, D, E, F, and G constitute the peripheral sector of the complex.

The protein localises to the cell inner membrane. It carries out the reaction a quinone + NADH + 5 H(+)(in) = a quinol + NAD(+) + 4 H(+)(out). In terms of biological role, NDH-1 shuttles electrons from NADH, via FMN and iron-sulfur (Fe-S) centers, to quinones in the respiratory chain. The immediate electron acceptor for the enzyme in this species is believed to be ubiquinone. Couples the redox reaction to proton translocation (for every two electrons transferred, four hydrogen ions are translocated across the cytoplasmic membrane), and thus conserves the redox energy in a proton gradient. This Rhizobium meliloti (strain 1021) (Ensifer meliloti) protein is NADH-quinone oxidoreductase subunit C 1.